The sequence spans 599 residues: Serine hydroxymethyltransferase 6 (599 aa).

Residues 1–25 (MDRIAQSDLSLGFGSSHALPLPHPP) are disordered. Lys-374 bears the N6-(pyridoxal phosphate)lysine mark.

The protein belongs to the SHMT family. In terms of assembly, homotetramer. Requires pyridoxal 5'-phosphate as cofactor.

It is found in the cytoplasm. The enzyme catalyses (6R)-5,10-methylene-5,6,7,8-tetrahydrofolate + glycine + H2O = (6S)-5,6,7,8-tetrahydrofolate + L-serine. It functions in the pathway one-carbon metabolism; tetrahydrofolate interconversion. Functionally, catalyzes the interconversion of serine and glycine. This Arabidopsis thaliana (Mouse-ear cress) protein is Serine hydroxymethyltransferase 6 (SHM6).